The primary structure comprises 288 residues: Phytanoyl-CoA dioxygenase domain-containing protein 1 homolog (288 aa).

2-oxoglutarate-binding positions include lysine 95, methionine 134, 149–151 (HVD), and tryptophan 167. Residues histidine 149 and aspartate 151 each coordinate Fe cation. Histidine 242 lines the Fe cation pocket. Residues serine 244 and arginine 253 each contribute to the 2-oxoglutarate site.

It belongs to the PhyH family. PHYHD1 subfamily. Fe cation serves as cofactor.

In terms of biological role, has alpha-ketoglutarate-dependent dioxygenase activity. Does not show detectable activity towards fatty acid CoA thioesters. Is not expected to be active with phytanoyl CoA. The chain is Phytanoyl-CoA dioxygenase domain-containing protein 1 homolog from Caenorhabditis briggsae.